The primary structure comprises 341 residues: Elongation factor Ts (341 aa).

The interval 80–83 (TDFV) is involved in Mg(2+) ion dislocation from EF-Tu.

It belongs to the EF-Ts family.

The protein resides in the cytoplasm. Functionally, associates with the EF-Tu.GDP complex and induces the exchange of GDP to GTP. It remains bound to the aminoacyl-tRNA.EF-Tu.GTP complex up to the GTP hydrolysis stage on the ribosome. The protein is Elongation factor Ts of Lactobacillus helveticus (strain DPC 4571).